Reading from the N-terminus, the 382-residue chain is Diphosphomevalonate decarboxylase ERG19 (382 aa).

(R)-5-diphosphomevalonate is bound by residues 22 to 25 (YWGK), arginine 78, 157 to 162 (SGSACR), and threonine 213.

It belongs to the diphosphomevalonate decarboxylase family. In terms of assembly, homodimer.

The catalysed reaction is (R)-5-diphosphomevalonate + ATP = isopentenyl diphosphate + ADP + phosphate + CO2. It participates in isoprenoid biosynthesis; isopentenyl diphosphate biosynthesis via mevalonate pathway; isopentenyl diphosphate from (R)-mevalonate: step 3/3. Functionally, diphosphomevalonate decarboxylase; part of the second module of ergosterol biosynthesis pathway that includes the middle steps of the pathway. MVD1 converts diphosphomevalonate into isopentenyl diphosphate. The second module is carried out in the vacuole and involves the formation of farnesyl diphosphate, which is also an important intermediate in the biosynthesis of ubiquinone, dolichol, heme and prenylated proteins. Activity by the mevalonate kinase ERG12 (FG05912) first converts mevalonate into 5-phosphomevalonate. 5-phosphomevalonate is then further converted to 5-diphosphomevalonate by the phosphomevalonate kinase ERG8 (FG09764). The diphosphomevalonate decarboxylase ERG19 (FG10424) then produces isopentenyl diphosphate. The isopentenyl-diphosphate delta-isomerase IDI1 (FG09722) then catalyzes the 1,3-allylic rearrangement of the homoallylic substrate isopentenyl (IPP) to its highly electrophilic allylic isomer, dimethylallyl diphosphate (DMAPP). Finally the farnesyl diphosphate synthase ERG20 (FG06784) catalyzes the sequential condensation of isopentenyl pyrophosphate with dimethylallyl pyrophosphate, and then with the resultant geranylpyrophosphate to the ultimate product farnesyl pyrophosphate. This Gibberella zeae (strain ATCC MYA-4620 / CBS 123657 / FGSC 9075 / NRRL 31084 / PH-1) (Wheat head blight fungus) protein is Diphosphomevalonate decarboxylase ERG19.